The sequence spans 117 residues: B-enzyme (117 aa).

The active site involves aspartate 89.

The catalysed reaction is Hydrolysis of (1-&gt;4)-beta-linkages between N-acetylmuramic acid and N-acetyl-D-glucosamine residues in a peptidoglycan and between N-acetyl-D-glucosamine residues in chitodextrins.. The polypeptide is B-enzyme (lyzB) (Bacillus subtilis).